The following is a 393-amino-acid chain: Glutamyl-tRNA reductase (393 aa).

Substrate contacts are provided by residues 47–50 (TCGR), S98, 103–105 (ETD), and Q109. The Nucleophile role is filled by C48. 177–182 (GAGAVG) is a binding site for NADP(+).

It belongs to the glutamyl-tRNA reductase family. As to quaternary structure, homodimer.

The catalysed reaction is (S)-4-amino-5-oxopentanoate + tRNA(Glu) + NADP(+) = L-glutamyl-tRNA(Glu) + NADPH + H(+). Its pathway is porphyrin-containing compound metabolism; protoporphyrin-IX biosynthesis; 5-aminolevulinate from L-glutamyl-tRNA(Glu): step 1/2. Its function is as follows. Catalyzes the NADPH-dependent reduction of glutamyl-tRNA(Glu) to glutamate 1-semialdehyde (GSA). This Pyrobaculum islandicum (strain DSM 4184 / JCM 9189 / GEO3) protein is Glutamyl-tRNA reductase.